A 92-amino-acid chain; its full sequence is Auxin-responsive protein SAUR28 (92 aa).

It belongs to the ARG7 family. Higher expression in thermo-responsive cultivars (e.g. cv. Alst-1, cv. Ang-0 and cv. Com-0) than in low thermo-responsive cultivars (e.g. cv. Dja-1, cv. El-0 and cv. Kon).

Its subcellular location is the cell membrane. Functionally, functions as a positive effector of cell expansion through modulation of auxin transport. Involved in thermo-responsiveness of plant architecture. Enhances plasma membrane H(+)-ATPase. The chain is Auxin-responsive protein SAUR28 from Arabidopsis thaliana (Mouse-ear cress).